A 223-amino-acid chain; its full sequence is Phosphoribosylformylglycinamidine synthase subunit PurQ (223 aa).

The region spanning 3–223 is the Glutamine amidotransferase type-1 domain; that stretch reads FAVLVFPGSN…MVKSWREQHV (221 aa). Cys85 acts as the Nucleophile in catalysis. Residues His193 and Glu195 contribute to the active site.

Part of the FGAM synthase complex composed of 1 PurL, 1 PurQ and 2 PurS subunits.

It is found in the cytoplasm. The enzyme catalyses N(2)-formyl-N(1)-(5-phospho-beta-D-ribosyl)glycinamide + L-glutamine + ATP + H2O = 2-formamido-N(1)-(5-O-phospho-beta-D-ribosyl)acetamidine + L-glutamate + ADP + phosphate + H(+). It catalyses the reaction L-glutamine + H2O = L-glutamate + NH4(+). The protein operates within purine metabolism; IMP biosynthesis via de novo pathway; 5-amino-1-(5-phospho-D-ribosyl)imidazole from N(2)-formyl-N(1)-(5-phospho-D-ribosyl)glycinamide: step 1/2. Part of the phosphoribosylformylglycinamidine synthase complex involved in the purines biosynthetic pathway. Catalyzes the ATP-dependent conversion of formylglycinamide ribonucleotide (FGAR) and glutamine to yield formylglycinamidine ribonucleotide (FGAM) and glutamate. The FGAM synthase complex is composed of three subunits. PurQ produces an ammonia molecule by converting glutamine to glutamate. PurL transfers the ammonia molecule to FGAR to form FGAM in an ATP-dependent manner. PurS interacts with PurQ and PurL and is thought to assist in the transfer of the ammonia molecule from PurQ to PurL. This Staphylococcus aureus (strain MSSA476) protein is Phosphoribosylformylglycinamidine synthase subunit PurQ.